Reading from the N-terminus, the 292-residue chain is Putative OX-2 membrane glycoprotein homolog (292 aa).

A signal peptide spans 1–18 (MSPLMLRLLPLLCIIISA). One can recognise an Ig-like V-type domain in the interval 24-136 (PETSPSLVYE…TFTVDNEKTS (113 aa)). A disulfide bond links Cys42 and Cys126. Residues Asn45, Asn57, Asn72, and Asn195 are each glycosylated (N-linked (GlcNAc...) asparagine; by host). One can recognise an Ig-like C2-type domain in the interval 147–237 (PIVVLYFRYL…TNQKASALVT (91 aa)). The chain crosses the membrane as a helical span at residues 263 to 283 (VFTWIVPLILILIISVMVLLI).

Its subcellular location is the host membrane. The chain is Putative OX-2 membrane glycoprotein homolog (U85) from Human herpesvirus 6B (strain Z29) (HHV-6 variant B).